A 228-amino-acid polypeptide reads, in one-letter code: Lipoprotein-releasing system ATP-binding protein LolD (228 aa).

Residues 8–228 (LQAKKLVKAY…ELHDGLLRRL (221 aa)) form the ABC transporter domain. 44–51 (GASGSGKS) is an ATP binding site.

This sequence belongs to the ABC transporter superfamily. Lipoprotein translocase (TC 3.A.1.125) family. The complex is composed of two ATP-binding proteins (LolD) and two transmembrane proteins (LolC and LolE).

Its subcellular location is the cell inner membrane. Part of the ABC transporter complex LolCDE involved in the translocation of mature outer membrane-directed lipoproteins, from the inner membrane to the periplasmic chaperone, LolA. Responsible for the formation of the LolA-lipoprotein complex in an ATP-dependent manner. This is Lipoprotein-releasing system ATP-binding protein LolD from Alcanivorax borkumensis (strain ATCC 700651 / DSM 11573 / NCIMB 13689 / SK2).